Reading from the N-terminus, the 349-residue chain is 4-hydroxythreonine-4-phosphate dehydrogenase (349 aa).

Substrate is bound by residues H141 and T142. A divalent metal cation is bound by residues H176, H221, and H276. K284, N293, and R302 together coordinate substrate.

Belongs to the PdxA family. As to quaternary structure, homodimer. Zn(2+) serves as cofactor. It depends on Mg(2+) as a cofactor. Co(2+) is required as a cofactor.

The protein localises to the cytoplasm. The enzyme catalyses 4-(phosphooxy)-L-threonine + NAD(+) = 3-amino-2-oxopropyl phosphate + CO2 + NADH. It participates in cofactor biosynthesis; pyridoxine 5'-phosphate biosynthesis; pyridoxine 5'-phosphate from D-erythrose 4-phosphate: step 4/5. Functionally, catalyzes the NAD(P)-dependent oxidation of 4-(phosphooxy)-L-threonine (HTP) into 2-amino-3-oxo-4-(phosphooxy)butyric acid which spontaneously decarboxylates to form 3-amino-2-oxopropyl phosphate (AHAP). This chain is 4-hydroxythreonine-4-phosphate dehydrogenase, found in Methylorubrum populi (strain ATCC BAA-705 / NCIMB 13946 / BJ001) (Methylobacterium populi).